The chain runs to 156 residues: Small ribosomal subunit protein uS7 (156 aa).

Belongs to the universal ribosomal protein uS7 family. In terms of assembly, part of the 30S ribosomal subunit. Contacts proteins S9 and S11.

Its function is as follows. One of the primary rRNA binding proteins, it binds directly to 16S rRNA where it nucleates assembly of the head domain of the 30S subunit. Is located at the subunit interface close to the decoding center, probably blocks exit of the E-site tRNA. This Rhodopseudomonas palustris (strain BisB5) protein is Small ribosomal subunit protein uS7.